Reading from the N-terminus, the 302-residue chain is Fluoroacetate dehalogenase (302 aa).

The AB hydrolase-1 domain occupies 32–270; sequence PPLLLLHGFP…LDVWRKWASD (239 aa). Catalysis depends on aspartate 110, which acts as the Nucleophile. 5 residues coordinate fluoroacetate: arginine 111, arginine 114, histidine 155, tryptophan 156, and tyrosine 219. Histidine 280 functions as the Proton acceptor in the catalytic mechanism.

Belongs to the AB hydrolase superfamily. Epoxide hydrolase family. In terms of assembly, homodimer.

The catalysed reaction is a haloacetate + H2O = a halide anion + glycolate + H(+). It catalyses the reaction fluoroacetate + H2O = fluoride + glycolate + H(+). It carries out the reaction chloroacetate + H2O = glycolate + chloride + H(+). Catalyzes the hydrolytic defluorination of fluoroacetate to produce glycolate. Has lower activity towards chloroacetate and bromoacetate. The protein is Fluoroacetate dehalogenase of Rhodopseudomonas palustris (strain ATCC BAA-98 / CGA009).